The chain runs to 189 residues: MQKIALCITGASGVIYGIKLLQVLEELDFSVDLVISRNAKVVLKEEHSLTFEEVLKGLKNVRIHEENDFTSPLASGSRLVHYRGVYVVPCSTNTLSCIANGINKNLIHRVGEVALKERVPLVLLVREAPYNEIHLENMLKITRMGGVVVPASPAFYHKPQSIDDMINFVVGKLLDVLRIEHNLYKRWRG.

Residues 10–12, serine 36, 91–94, and arginine 126 contribute to the FMN site; these read GAS and STNT. Residues tyrosine 156 and lysine 172 each coordinate dimethylallyl phosphate.

Belongs to the UbiX/PAD1 family.

It carries out the reaction dimethylallyl phosphate + FMNH2 = prenylated FMNH2 + phosphate. Its function is as follows. Flavin prenyltransferase that catalyzes the synthesis of the prenylated FMN cofactor (prenyl-FMN) for 4-hydroxy-3-polyprenylbenzoic acid decarboxylase UbiD. The prenyltransferase is metal-independent and links a dimethylallyl moiety from dimethylallyl monophosphate (DMAP) to the flavin N5 and C6 atoms of FMN. The chain is Flavin prenyltransferase UbiX from Aquifex aeolicus (strain VF5).